A 432-amino-acid chain; its full sequence is Ornithine aminotransferase, mitochondrial (432 aa).

N6-(pyridoxal phosphate)lysine is present on Lys287.

The protein belongs to the class-III pyridoxal-phosphate-dependent aminotransferase family. In terms of assembly, homotetramer. The cofactor is pyridoxal 5'-phosphate.

The protein localises to the mitochondrion matrix. The enzyme catalyses a 2-oxocarboxylate + L-ornithine = L-glutamate 5-semialdehyde + an L-alpha-amino acid. It participates in amino-acid biosynthesis; L-proline biosynthesis; L-glutamate 5-semialdehyde from L-ornithine: step 1/1. The chain is Ornithine aminotransferase, mitochondrial (Oat) from Drosophila ananassae (Fruit fly).